The primary structure comprises 379 residues: Succinyl-diaminopimelate desuccinylase (379 aa).

Residue His70 coordinates Zn(2+). Residue Asp72 is part of the active site. Zn(2+) is bound at residue Asp103. Glu137 (proton acceptor) is an active-site residue. The Zn(2+) site is built by Glu138, Glu166, and His352.

Belongs to the peptidase M20A family. DapE subfamily. Homodimer. The cofactor is Zn(2+). Co(2+) is required as a cofactor.

It catalyses the reaction N-succinyl-(2S,6S)-2,6-diaminopimelate + H2O = (2S,6S)-2,6-diaminopimelate + succinate. It participates in amino-acid biosynthesis; L-lysine biosynthesis via DAP pathway; LL-2,6-diaminopimelate from (S)-tetrahydrodipicolinate (succinylase route): step 3/3. In terms of biological role, catalyzes the hydrolysis of N-succinyl-L,L-diaminopimelic acid (SDAP), forming succinate and LL-2,6-diaminopimelate (DAP), an intermediate involved in the bacterial biosynthesis of lysine and meso-diaminopimelic acid, an essential component of bacterial cell walls. This Shewanella sp. (strain W3-18-1) protein is Succinyl-diaminopimelate desuccinylase.